We begin with the raw amino-acid sequence, 95 residues long: Putative pterin-4-alpha-carbinolamine dehydratase (95 aa).

Belongs to the pterin-4-alpha-carbinolamine dehydratase family.

It catalyses the reaction (4aS,6R)-4a-hydroxy-L-erythro-5,6,7,8-tetrahydrobiopterin = (6R)-L-erythro-6,7-dihydrobiopterin + H2O. The sequence is that of Putative pterin-4-alpha-carbinolamine dehydratase from Thermosynechococcus vestitus (strain NIES-2133 / IAM M-273 / BP-1).